The chain runs to 435 residues: 5-methylthioadenosine/S-adenosylhomocysteine deaminase (435 aa).

The Zn(2+) site is built by H65 and H67. The substrate site is built by E94, R150, and H189. H216 contacts Zn(2+). Residues E219 and D304 each coordinate substrate. Position 304 (D304) interacts with Zn(2+).

The protein belongs to the metallo-dependent hydrolases superfamily. MTA/SAH deaminase family. Zn(2+) serves as cofactor.

The enzyme catalyses S-adenosyl-L-homocysteine + H2O + H(+) = S-inosyl-L-homocysteine + NH4(+). It carries out the reaction S-methyl-5'-thioadenosine + H2O + H(+) = S-methyl-5'-thioinosine + NH4(+). Its function is as follows. Catalyzes the deamination of 5-methylthioadenosine and S-adenosyl-L-homocysteine into 5-methylthioinosine and S-inosyl-L-homocysteine, respectively. Is also able to deaminate adenosine. The sequence is that of 5-methylthioadenosine/S-adenosylhomocysteine deaminase from Bacillus cereus (strain ATCC 14579 / DSM 31 / CCUG 7414 / JCM 2152 / NBRC 15305 / NCIMB 9373 / NCTC 2599 / NRRL B-3711).